The sequence spans 575 residues: Physarolisin (575 aa).

Positions 1–18 are cleaved as a signal peptide; it reads MRLLSLLFLLGLATLSFA. Positions 19–173 are cleaved as a propeptide — removed in mature form; it reads VRSQWAQQGR…SIKNARTQVG (155 aa). A Peptidase S53 domain is found at 179-574; sequence YIVPYVIFDL…SKLLAFVQTL (396 aa). N-linked (GlcNAc...) asparagine glycosylation is present at Asn-200. Residues Glu-248 and Asp-252 each act as charge relay system in the active site. Asn-262, Asn-307, Asn-380, and Asn-453 each carry an N-linked (GlcNAc...) asparagine glycan. Ser-484 acts as the Charge relay system in catalysis. Ca(2+)-binding residues include Asp-529, Ile-530, Gly-552, and Asp-554.

Ca(2+) is required as a cofactor. In terms of processing, autocatalytically processed. Post-translationally, N-glycosylated.

It carries out the reaction Milk clotting activity. Preferential cleavage of 8-Gly-|-Ser-9 in B chain of insulin most rapidly, followed by 11-Leu-|-Val-12, 19-Cys(SO(3)H)-|-Gly and 24-Phe-|-Phe-25. No action on Ac-Phe-Tyr(I)2.. With respect to regulation, inhibited by diisopropylfluorophosphate (DFP) and diazoacetyl-D,L-norleucine methyl ester (DAN). In Physarum polycephalum (Slime mold), this protein is Physarolisin.